Reading from the N-terminus, the 288-residue chain is UAP56-interacting factor (288 aa).

A UAP56-binding motif motif is present at residues 11–29; sequence TIDKIDMSLDDIIKLNKQE. The tract at residues 183–202 is disordered; sequence DLPELSKTPPWRTSVSSGGS.

This sequence belongs to the UIF family.

The protein resides in the nucleus. It localises to the nucleoplasm. Its subcellular location is the nucleus speckle. Required for mRNA export from the nucleus to the cytoplasm. Acts as an adapter that uses the ddx39b/uap56-nfx1 pathway to ensure efficient mRNA export and delivering to the nuclear pore. The sequence is that of UAP56-interacting factor (fyttd1) from Xenopus laevis (African clawed frog).